Here is an 81-residue protein sequence, read N- to C-terminus: ATP synthase subunit c (81 aa).

2 consecutive transmembrane segments (helical) span residues 5–25 (VAAASVIAAALAVGLAAIGPG) and 57–77 (LAFMESLTIYGLVIALVLLFA).

Belongs to the ATPase C chain family. As to quaternary structure, F-type ATPases have 2 components, F(1) - the catalytic core - and F(0) - the membrane proton channel. F(1) has five subunits: alpha(3), beta(3), gamma(1), delta(1), epsilon(1). F(0) has four main subunits: a(1), b(1), b'(1) and c(10-14). The alpha and beta chains form an alternating ring which encloses part of the gamma chain. F(1) is attached to F(0) by a central stalk formed by the gamma and epsilon chains, while a peripheral stalk is formed by the delta, b and b' chains.

The protein localises to the cellular thylakoid membrane. Functionally, f(1)F(0) ATP synthase produces ATP from ADP in the presence of a proton or sodium gradient. F-type ATPases consist of two structural domains, F(1) containing the extramembraneous catalytic core and F(0) containing the membrane proton channel, linked together by a central stalk and a peripheral stalk. During catalysis, ATP synthesis in the catalytic domain of F(1) is coupled via a rotary mechanism of the central stalk subunits to proton translocation. In terms of biological role, key component of the F(0) channel; it plays a direct role in translocation across the membrane. A homomeric c-ring of between 10-14 subunits forms the central stalk rotor element with the F(1) delta and epsilon subunits. The sequence is that of ATP synthase subunit c from Microcystis aeruginosa (strain NIES-843 / IAM M-2473).